A 646-amino-acid chain; its full sequence is DEAD-box ATP-dependent RNA helicase 52 (646 aa).

Disordered regions lie at residues 1 to 64 and 76 to 117; these read MSSN…ANSG and GSGY…PAVN. Ser-2 bears the N-acetylserine mark. Composition is skewed to gly residues over residues 54–64 and 76–87; these read DRGGYGGANSG and GSGYGGRGGPVG. The short motif at 146–174 is the Q motif element; it reads NTFAEIDLGEALNLNIQRCKYVKPTPVQR. Residues 177 to 361 form the Helicase ATP-binding domain; it reads IPILAAGRDL…SDFLSNYIFL (185 aa). 190–197 lines the ATP pocket; the sequence is AQTGSGKT. A DEAD box motif is present at residues 305–308; it reads DEAD. Residues 388–539 enclose the Helicase C-terminal domain; the sequence is HLMDLLHAQR…EVPDWLTRYA (152 aa).

This sequence belongs to the DEAD box helicase family. DDX3/DED1 subfamily.

The enzyme catalyses ATP + H2O = ADP + phosphate + H(+). This is DEAD-box ATP-dependent RNA helicase 52 (RH52) from Arabidopsis thaliana (Mouse-ear cress).